Here is an 847-residue protein sequence, read N- to C-terminus: Alpha-glucuronidase A (847 aa).

An N-terminal signal peptide occupies residues 1–22; it reads MRSFLLLTALLGVAAVAEDGLA. 13 N-linked (GlcNAc...) asparagine glycosylation sites follow: Asn-48, Asn-78, Asn-227, Asn-315, Asn-349, Asn-457, Asn-472, Asn-534, Asn-583, Asn-689, Asn-738, Asn-739, and Asn-769.

This sequence belongs to the glycosyl hydrolase 67 family.

It localises to the secreted. The catalysed reaction is an alpha-D-glucuronoside + H2O = D-glucuronate + an alcohol. Its function is as follows. Alpha-glucuronidase involved in the hydrolysis of xylan, a major structural heterogeneous polysaccharide found in plant biomass representing the second most abundant polysaccharide in the biosphere, after cellulose. Releases 4-O-methylglucuronic acid from xylan. This is Alpha-glucuronidase A (aguA) from Emericella nidulans (strain FGSC A4 / ATCC 38163 / CBS 112.46 / NRRL 194 / M139) (Aspergillus nidulans).